We begin with the raw amino-acid sequence, 753 residues long: 5-methyltetrahydropteroyltriglutamate--homocysteine methyltransferase (753 aa).

5-methyltetrahydropteroyltri-L-glutamate-binding positions include Arg17–Lys20 and Lys117. Residues Ile431–Ser433 and Glu484 each bind L-homocysteine. L-methionine is bound by residues Ile431 to Ser433 and Glu484. 5-methyltetrahydropteroyltri-L-glutamate-binding positions include Arg515–Cys516 and Trp561. Asp599 lines the L-homocysteine pocket. Position 599 (Asp599) interacts with L-methionine. Glu605 serves as a coordination point for 5-methyltetrahydropteroyltri-L-glutamate. Zn(2+) contacts are provided by His641, Cys643, and Glu665. The active-site Proton donor is the His694. Cys726 is a Zn(2+) binding site.

Belongs to the vitamin-B12 independent methionine synthase family. Zn(2+) is required as a cofactor.

It catalyses the reaction 5-methyltetrahydropteroyltri-L-glutamate + L-homocysteine = tetrahydropteroyltri-L-glutamate + L-methionine. The protein operates within amino-acid biosynthesis; L-methionine biosynthesis via de novo pathway; L-methionine from L-homocysteine (MetE route): step 1/1. Functionally, catalyzes the transfer of a methyl group from 5-methyltetrahydrofolate to homocysteine resulting in methionine formation. This is 5-methyltetrahydropteroyltriglutamate--homocysteine methyltransferase from Shigella boydii serotype 18 (strain CDC 3083-94 / BS512).